The sequence spans 138 residues: DNA-directed RNA polymerase subunit omega (138 aa).

The tract at residues 104 to 138 (GNSDGLENSSNSRDDNPLGRDNFFSTPENRNNTNS) is disordered. Polar residues predominate over residues 126–138 (FFSTPENRNNTNS).

It belongs to the RNA polymerase subunit omega family. The RNAP catalytic core consists of 2 alpha, 1 beta, 1 beta' and 1 omega subunit. When a sigma factor is associated with the core the holoenzyme is formed, which can initiate transcription.

The catalysed reaction is RNA(n) + a ribonucleoside 5'-triphosphate = RNA(n+1) + diphosphate. In terms of biological role, promotes RNA polymerase assembly. Latches the N- and C-terminal regions of the beta' subunit thereby facilitating its interaction with the beta and alpha subunits. This chain is DNA-directed RNA polymerase subunit omega, found in Ehrlichia chaffeensis (strain ATCC CRL-10679 / Arkansas).